Consider the following 92-residue polypeptide: Large ribosomal subunit protein eL43 (92 aa).

Residues C39, C42, C57, and C60 each coordinate Zn(2+).

This sequence belongs to the eukaryotic ribosomal protein eL43 family. As to quaternary structure, component of the large ribosomal subunit. Mature ribosomes consist of a small (40S) and a large (60S) subunit. The 40S subunit contains 32 different proteins and 1 molecule of RNA (18S). The 60S subunit contains 45 different proteins and 3 molecules of RNA (25S, 5.8S and 5S). It depends on Zn(2+) as a cofactor.

The protein resides in the cytoplasm. Functionally, component of the ribosome, a large ribonucleoprotein complex responsible for the synthesis of proteins in the cell. The small ribosomal subunit (SSU) binds messenger RNAs (mRNAs) and translates the encoded message by selecting cognate aminoacyl-transfer RNA (tRNA) molecules. The large subunit (LSU) contains the ribosomal catalytic site termed the peptidyl transferase center (PTC), which catalyzes the formation of peptide bonds, thereby polymerizing the amino acids delivered by tRNAs into a polypeptide chain. The nascent polypeptides leave the ribosome through a tunnel in the LSU and interact with protein factors that function in enzymatic processing, targeting, and the membrane insertion of nascent chains at the exit of the ribosomal tunnel. This Candida albicans (strain SC5314 / ATCC MYA-2876) (Yeast) protein is Large ribosomal subunit protein eL43.